Reading from the N-terminus, the 158-residue chain is HVA22-like protein f (158 aa).

The next 3 helical transmembrane spans lie at 2–22 (GFII…VMLL), 41–61 (QQWL…LSVW), and 63–83 (VLAW…WLVL).

The protein belongs to the DP1 family.

Its subcellular location is the membrane. In Arabidopsis thaliana (Mouse-ear cress), this protein is HVA22-like protein f (HVA22F).